Reading from the N-terminus, the 470-residue chain is Siroheme synthase (470 aa).

Residues 1–213 (MSDATDPGWF…GEHAAARQVL (213 aa)) are precorrin-2 dehydrogenase /sirohydrochlorin ferrochelatase. NAD(+) is bound by residues 28 to 29 (GI) and 49 to 50 (PR). Residues 224–470 (GEVWLVGAGP…VVTPPPLSGT (247 aa)) are uroporphyrinogen-III C-methyltransferase. Pro-233 provides a ligand contact to S-adenosyl-L-methionine. Catalysis depends on Asp-256, which acts as the Proton acceptor. Lys-278 acts as the Proton donor in catalysis. Residues 309–311 (GGD), Ile-314, 339–340 (TA), Met-392, and Gly-421 contribute to the S-adenosyl-L-methionine site.

This sequence in the N-terminal section; belongs to the precorrin-2 dehydrogenase / sirohydrochlorin ferrochelatase family. In the C-terminal section; belongs to the precorrin methyltransferase family.

It catalyses the reaction uroporphyrinogen III + 2 S-adenosyl-L-methionine = precorrin-2 + 2 S-adenosyl-L-homocysteine + H(+). It carries out the reaction precorrin-2 + NAD(+) = sirohydrochlorin + NADH + 2 H(+). The catalysed reaction is siroheme + 2 H(+) = sirohydrochlorin + Fe(2+). It functions in the pathway cofactor biosynthesis; adenosylcobalamin biosynthesis; precorrin-2 from uroporphyrinogen III: step 1/1. Its pathway is cofactor biosynthesis; adenosylcobalamin biosynthesis; sirohydrochlorin from precorrin-2: step 1/1. The protein operates within porphyrin-containing compound metabolism; siroheme biosynthesis; precorrin-2 from uroporphyrinogen III: step 1/1. It participates in porphyrin-containing compound metabolism; siroheme biosynthesis; siroheme from sirohydrochlorin: step 1/1. It functions in the pathway porphyrin-containing compound metabolism; siroheme biosynthesis; sirohydrochlorin from precorrin-2: step 1/1. Functionally, multifunctional enzyme that catalyzes the SAM-dependent methylations of uroporphyrinogen III at position C-2 and C-7 to form precorrin-2 via precorrin-1. Then it catalyzes the NAD-dependent ring dehydrogenation of precorrin-2 to yield sirohydrochlorin. Finally, it catalyzes the ferrochelation of sirohydrochlorin to yield siroheme. This is Siroheme synthase from Gluconacetobacter diazotrophicus (strain ATCC 49037 / DSM 5601 / CCUG 37298 / CIP 103539 / LMG 7603 / PAl5).